Reading from the N-terminus, the 372-residue chain is Gibberellin 20 oxidase 1 (372 aa).

In terms of domain architecture, Fe2OG dioxygenase spans 209–309 (RNDSIMRLNY…RRSLAFFLCP (101 aa)). Positions 234, 236, and 290 each coordinate Fe cation. The active site involves Arg-300.

Belongs to the iron/ascorbate-dependent oxidoreductase family. GA20OX subfamily. The cofactor is Fe(2+). L-ascorbate is required as a cofactor. In terms of tissue distribution, preferentially expressed in reproductive organs. Expressed in the epithelium of embryos and the tapetum of anthers. Expressed at low levels in the shoot apical meristem.

The catalysed reaction is gibberellin A12 + 2 2-oxoglutarate + 3 O2 + H(+) = gibberellin A9 + 2 succinate + 3 CO2 + 2 H2O. It catalyses the reaction gibberellin A53 + 2 2-oxoglutarate + 3 O2 + H(+) = gibberellin A20 + 2 succinate + 3 CO2 + 2 H2O. Functionally, key oxidase enzyme in the biosynthesis of gibberellin. Catalyzes the conversion of GA12 and GA53 to GA9 and GA20 respectively, via a three-step oxidation at C-20 of the GA skeleton. In Oryza sativa subsp. japonica (Rice), this protein is Gibberellin 20 oxidase 1.